Reading from the N-terminus, the 142-residue chain is Acidic phospholipase A2 KBf-grIB (142 aa).

Disulfide bonds link C28/C94, C44/C141, C46/C62, C61/C122, C68/C115, C78/C108, and C101/C113. Ca(2+) is bound by residues Y45, G47, and G49. H65 is an active-site residue. Residue D66 participates in Ca(2+) binding. D116 is an active-site residue.

Belongs to the phospholipase A2 family. Group I subfamily. D49 sub-subfamily. Ca(2+) is required as a cofactor. Expressed by the venom gland.

The protein localises to the secreted. The catalysed reaction is a 1,2-diacyl-sn-glycero-3-phosphocholine + H2O = a 1-acyl-sn-glycero-3-phosphocholine + a fatty acid + H(+). PLA2 catalyzes the calcium-dependent hydrolysis of the 2-acyl groups in 3-sn-phosphoglycerides. This is Acidic phospholipase A2 KBf-grIB from Bungarus fasciatus (Banded krait).